Here is an 82-residue protein sequence, read N- to C-terminus: Large ribosomal subunit protein bL31B (82 aa).

This sequence belongs to the bacterial ribosomal protein bL31 family. Type B subfamily. In terms of assembly, part of the 50S ribosomal subunit.

The protein is Large ribosomal subunit protein bL31B of Amoebophilus asiaticus (strain 5a2).